We begin with the raw amino-acid sequence, 241 residues long: MQLPPVHSVSLSEYFVSGNVIIHETAVIAPGVILEAAPDCQITIEAGVCIGLGSVISAHAGDVKIQEQTAIAPGCLVIGPVTIGATACLGSRSTVFQQDIDAQVLIPPGSLLMNRVADVQTVGASSPTTDSVTEKKSPSTANPIAPIPSPWDNEPPAKGTDSPSDQAKESIARQSRPSTAEAAEQISSNRSPGESTPTAPTVVTTAPLVSEEVQEKPPVVGQVYINQLLLTLFPERRYFSS.

Positions 123–206 (GASSPTTDSV…PTAPTVVTTA (84 aa)) are disordered. Residues 185-195 (QISSNRSPGES) are compositionally biased toward polar residues. Residues 196–206 (TPTAPTVVTTA) are compositionally biased toward low complexity. Residues 219–241 (VVGQVYINQLLLTLFPERRYFSS) carry the Encapsulation peptide motif.

Belongs to the CcmN family. As to quaternary structure, interacts with full-length and the N-terminal 249 residues of CcmM; a probable CcmM-CcaA-CcmN complex can also be isolated. Interacts with CcmK.

The protein localises to the carboxysome. In terms of biological role, required for carboxysome formation; the N-terminus interacts with CcmM which itself binds RuBisCO (ribulose bisphosphate carboxylase, rbcL-rbcS). May also contact shell protein CcmK to help assemble the carboxysome. Beta-carboxysome assembly initiates when soluble RuBisCO is condensed into a liquid matrix in a pre-carboxysome by the RbcS-like domains of probably both forms of CcmM. CcmN interacts with the N-terminus of full-length CcmM, and then recruits the CcmK major shell protein via CcmN's encapsulation peptide. Shell formation requires CcmK proteins and CcmO. CcmL caps the otherwise elongated carboxysome. Once fully encapsulated carboxysomes are formed, they migrate within the cell probably via interactions with the cytoskeleton. The chain is Carboxysome assembly protein CcmN from Synechocystis sp. (strain ATCC 27184 / PCC 6803 / Kazusa).